The sequence spans 198 residues: Mediator of RNA polymerase II transcription subunit 22 (198 aa).

The interval tryptophan 159–serine 198 is disordered.

This sequence belongs to the Mediator complex subunit 22 family. As to quaternary structure, component of the Mediator complex.

Its subcellular location is the nucleus. Functionally, component of the Mediator complex, a coactivator involved in the regulated transcription of nearly all RNA polymerase II-dependent genes. Mediator functions as a bridge to convey information from gene-specific regulatory proteins to the basal RNA polymerase II transcription machinery. Mediator is recruited to promoters by direct interactions with regulatory proteins and serves as a scaffold for the assembly of a functional preinitiation complex with RNA polymerase II and the general transcription factors. The protein is Mediator of RNA polymerase II transcription subunit 22 (med22) of Danio rerio (Zebrafish).